Here is a 397-residue protein sequence, read N- to C-terminus: Monooxygenase 1 (397 aa).

It belongs to the 3-hydroxybenzoate 6-hydroxylase family. As to quaternary structure, monomer. FAD is required as a cofactor. In terms of tissue distribution, expressed in seedlings, roots, leaves, flowers and siliques.

The polypeptide is Monooxygenase 1 (Arabidopsis thaliana (Mouse-ear cress)).